Consider the following 664-residue polypeptide: Threonine--tRNA ligase (664 aa).

Residues 1-64 (MSELLKITLP…TADAQLALVT (64 aa)) enclose the TGS domain. A catalytic region spans residues 250-559 (DHRKLGNEMD…LIEHFAGRLP (310 aa)). Residues C355, H406, and H536 each contribute to the Zn(2+) site.

The protein belongs to the class-II aminoacyl-tRNA synthetase family. As to quaternary structure, homodimer. It depends on Zn(2+) as a cofactor.

Its subcellular location is the cytoplasm. The enzyme catalyses tRNA(Thr) + L-threonine + ATP = L-threonyl-tRNA(Thr) + AMP + diphosphate + H(+). Catalyzes the attachment of threonine to tRNA(Thr) in a two-step reaction: L-threonine is first activated by ATP to form Thr-AMP and then transferred to the acceptor end of tRNA(Thr). Also edits incorrectly charged L-seryl-tRNA(Thr). The sequence is that of Threonine--tRNA ligase from Novosphingobium aromaticivorans (strain ATCC 700278 / DSM 12444 / CCUG 56034 / CIP 105152 / NBRC 16084 / F199).